The chain runs to 89 residues: Small ribosomal subunit protein uS14A (89 aa).

This sequence belongs to the universal ribosomal protein uS14 family. As to quaternary structure, part of the 30S ribosomal subunit. Contacts proteins S3 and S10.

Binds 16S rRNA, required for the assembly of 30S particles and may also be responsible for determining the conformation of the 16S rRNA at the A site. The sequence is that of Small ribosomal subunit protein uS14A from Lactococcus lactis subsp. lactis (strain IL1403) (Streptococcus lactis).